A 41-amino-acid chain; its full sequence is Large ribosomal subunit protein bL36 (41 aa).

Belongs to the bacterial ribosomal protein bL36 family.

The chain is Large ribosomal subunit protein bL36 from Edwardsiella ictaluri (strain 93-146).